A 507-amino-acid chain; its full sequence is Arylsulfatase A (507 aa).

The signal sequence occupies residues Met1–Ala18. Residues Asp29, Asp30, and Cys69 each coordinate Ca(2+). Residue Cys69 is the Nucleophile of the active site. At Cys69 the chain carries 3-oxoalanine (Cys). Lys123 is a substrate binding site. His125 is a catalytic residue. Position 150 (Ser150) interacts with substrate. Cystine bridges form between Cys156-Cys172 and Cys161-Cys168. Asn158 carries an N-linked (GlcNAc...) asparagine glycan. N-linked (GlcNAc...) asparagine glycosylation is present at Asn184. His229 is a binding site for substrate. Asp281 and Asn282 together coordinate Ca(2+). 4 disulfides stabilise this stretch: Cys300-Cys414, Cys488-Cys500, Cys489-Cys502, and Cys493-Cys499. Lys302 is a substrate binding site. Residue Asn350 is glycosylated (N-linked (GlcNAc...) asparagine).

It belongs to the sulfatase family. In terms of assembly, homodimer at neutral pH and homooctamer at acidic pH. Exists both as a single chain of 58 kDa (component A) or as a chain of 50 kDa (component B) linked by disulfide bond(s) to a 7 kDa chain (component C). Interacts with SUMF1. Ca(2+) serves as cofactor. Post-translationally, the conversion to 3-oxoalanine (also known as C-formylglycine, FGly), of a serine or cysteine residue in prokaryotes and of a cysteine residue in eukaryotes, is critical for catalytic activity. This post-translational modification is severely defective in multiple sulfatase deficiency (MSD).

It is found in the endoplasmic reticulum. The protein resides in the lysosome. The catalysed reaction is an N-acyl-1-beta-D-(3-O-sulfo)-galactosyl-sphing-4-enine + H2O = a beta-D-galactosyl-(1&lt;-&gt;1')-N-acylsphing-4-enine + sulfate + H(+). In terms of biological role, hydrolyzes cerebroside sulfate. The polypeptide is Arylsulfatase A (ARSA) (Bos taurus (Bovine)).